The following is a 405-amino-acid chain: 26S proteasome regulatory subunit 8 homolog (405 aa).

Thr2 carries the post-translational modification N-acetylthreonine. 189–196 (GPPGTGKT) lines the ATP pocket.

The protein belongs to the AAA ATPase family. May form a homodimer or a heterodimer with a related family member. Interacts with OLA1, TMA17, and UBR1. Post-translationally, N-acetylated by NAT1.

The protein localises to the cytoplasm. Its subcellular location is the nucleus. The 26S proteasome is involved in the ATP-dependent degradation of ubiquitinated proteins. The regulatory (or ATPase) complex confers ATP dependency and substrate specificity to the 26S complex. The polypeptide is 26S proteasome regulatory subunit 8 homolog (RPT6) (Saccharomyces cerevisiae (strain ATCC 204508 / S288c) (Baker's yeast)).